Reading from the N-terminus, the 149-residue chain is D-aminoacyl-tRNA deacylase (149 aa).

The short motif at 137 to 138 (GP) is the Gly-cisPro motif, important for rejection of L-amino acids element.

The protein belongs to the DTD family. As to quaternary structure, homodimer.

It is found in the cytoplasm. The enzyme catalyses glycyl-tRNA(Ala) + H2O = tRNA(Ala) + glycine + H(+). It carries out the reaction a D-aminoacyl-tRNA + H2O = a tRNA + a D-alpha-amino acid + H(+). An aminoacyl-tRNA editing enzyme that deacylates mischarged D-aminoacyl-tRNAs. Also deacylates mischarged glycyl-tRNA(Ala), protecting cells against glycine mischarging by AlaRS. Acts via tRNA-based rather than protein-based catalysis; rejects L-amino acids rather than detecting D-amino acids in the active site. By recycling D-aminoacyl-tRNA to D-amino acids and free tRNA molecules, this enzyme counteracts the toxicity associated with the formation of D-aminoacyl-tRNA entities in vivo and helps enforce protein L-homochirality. The protein is D-aminoacyl-tRNA deacylase of Syntrophomonas wolfei subsp. wolfei (strain DSM 2245B / Goettingen).